A 277-amino-acid chain; its full sequence is Carbonyl reductase [NADPH] 3 (277 aa).

N-acetylserine is present on Ser-2. Residues 10–34 (VTGA…GDVV), 38–42 (RDEAR), 63–64 (DI), and Asn-90 contribute to the NADP(+) site. The residue at position 30 (Ser-30) is a Phosphoserine. Ser-140 is a substrate binding site. Residue Tyr-194 is the Proton acceptor of the active site. 194-198 (YGVSK) contacts NADP(+).

This sequence belongs to the short-chain dehydrogenases/reductases (SDR) family.

The protein resides in the cytoplasm. The enzyme catalyses a secondary alcohol + NADP(+) = a ketone + NADPH + H(+). The catalysed reaction is a quinone + NADPH + H(+) = a quinol + NADP(+). Its function is as follows. Catalyzes the NADPH-dependent reduction of carbonyl compounds to their corresponding alcohols. Has low NADPH-dependent oxidoreductase activity. Acts on several orthoquinones, as well as on non-quinone compounds, such as isatin or on the anticancer drug oracin. Best substrates for CBR3 is 1,2- naphthoquinone, hence could play a role in protection against cytotoxicity of exogenous quinones. Exerts activity toward ortho-quinones but not paraquinones. No endogenous substrate for CBR3 except isatin has been identified. This chain is Carbonyl reductase [NADPH] 3, found in Rattus norvegicus (Rat).